A 365-amino-acid chain; its full sequence is Spore germination protein A2 (365 aa).

The next 11 membrane-spanning stretches (helical) occupy residues 12–32 (TFQGISIVANTMLGAGLLTLP), 45–65 (WITLILEGFIFIFFIYLNTLI), 85–105 (WIGSIIGLLICGYFLGVASFE), 122–142 (PIQVIILTFICCGIYLMVGGL), 148–168 (LFPFYLTVTIIILLIVFGISF), 187–207 (IANSLTVVSISFLGMEVMLFL), 223–243 (LGFLIPIILYILTYIIVVGAL), 250–270 (TLIWPTISLFQSFELKGIFIE), 275–295 (FLLVVWIIQFFTTFVIYGYFA), 303–323 (FGLSTKTSMVIIGITVFYFSL), and 338–358 (LGYIFVSLFLLPFILFFIVAL).

Belongs to the amino acid-polyamine-organocation (APC) superfamily. Spore germination protein (SGP) (TC 2.A.3.9) family.

The protein localises to the cell membrane. Its function is as follows. Involved in the germinative response to L-alanine. Could be an amino acid transporter. Forms a complex at the inner spore membrane which acts as a receptor for L-alanine, thus is involved in the stimulation of germination in response to alanine. Can stimulate germination in the absence of gerD and gerK gene products (fructose and glucose receptors, respectively), but the response is improved in their presence. This chain is Spore germination protein A2 (gerAB), found in Bacillus subtilis (strain 168).